Here is a 447-residue protein sequence, read N- to C-terminus: ATP-dependent protease ATPase subunit HslU (447 aa).

Residues isoleucine 17, 59–64, aspartate 256, glutamate 321, and arginine 393 each bind ATP; that span reads GVGKTE.

It belongs to the ClpX chaperone family. HslU subfamily. A double ring-shaped homohexamer of HslV is capped on each side by a ring-shaped HslU homohexamer. The assembly of the HslU/HslV complex is dependent on binding of ATP.

It localises to the cytoplasm. Functionally, ATPase subunit of a proteasome-like degradation complex; this subunit has chaperone activity. The binding of ATP and its subsequent hydrolysis by HslU are essential for unfolding of protein substrates subsequently hydrolyzed by HslV. HslU recognizes the N-terminal part of its protein substrates and unfolds these before they are guided to HslV for hydrolysis. The sequence is that of ATP-dependent protease ATPase subunit HslU from Pseudomonas putida (strain W619).